The sequence spans 554 residues: Calcium-dependent protein kinase 3 (554 aa).

Residues 30–55 (KKKSSNKSIKSQHKFEGSKIANKNNE) form a disordered region. A Protein kinase domain is found at 110-365 (NLSEEPLGKG…ASEALKHPWF (256 aa)). ATP contacts are provided by residues 116–124 (LGKGTYGCV) and lysine 139. Aspartate 230 (proton acceptor) is an active-site residue. The short motif at 385–393 (NFKNYALLL) is the J domain autoinhibitory motif element. A j domain region spans residues 385-420 (NFKNYALLLKLQKLAMTIIAQQSNDYDLQQLKTVFL). The short motif at 394–403 (KLQKLAMTII) is the J domain EF-hand interaction motif element. 4 consecutive EF-hand domains span residues 410-445 (YDLQ…SGLK), 448-479 (QNFD…DRKH), 480-515 (LSKK…GNKK), and 521-554 (KDVN…KLKY). Ca(2+)-binding residues include aspartate 458, aspartate 460, serine 462, arginine 464, glutamate 469, aspartate 493, aspartate 495, aspartate 497, glutamate 499, glutamate 504, aspartate 534, asparagine 536, aspartate 538, lysine 540, and glutamate 545.

This sequence belongs to the protein kinase superfamily. Ser/Thr protein kinase family. CDPK subfamily. Mg(2+) is required as a cofactor.

The protein resides in the cytoplasm. The enzyme catalyses L-seryl-[protein] + ATP = O-phospho-L-seryl-[protein] + ADP + H(+). It catalyses the reaction L-threonyl-[protein] + ATP = O-phospho-L-threonyl-[protein] + ADP + H(+). Its activity is regulated as follows. Activated by calcium. Upon calcium binding to the EF-hand domain 2, the C-terminus of the junction domain (J domain) undergoes a conformational change which results in the dissociation of the pseudo-substrate inhibitory motif from the catalytic domain. This, in turn, may facilitate the autophosphorylation of the activation loop at Thr-271, which leads to the kinase activation. Calcium-dependent protein kinase which acts as a sensor and effector of intracellular Ca(2+) levels probably in part downstream of cGMP-activated PKG kinase. In the mosquito midgut, regulates the gliding motility of the ookinete which is essential for the ookinete to invade the midgut epithelium. However, another study showed that while required for ookinete invasion of the midgut epithelium, is not required for ookinete gliding motility. This chain is Calcium-dependent protein kinase 3, found in Plasmodium berghei (strain Anka).